The following is a 567-amino-acid chain: Malate synthase, glyoxysomal (567 aa).

The active-site Proton acceptor is arginine 182. Aspartate 468 functions as the Proton donor in the catalytic mechanism. The short motif at serine 565 to leucine 567 is the Microbody targeting signal element.

The protein belongs to the malate synthase family.

The protein localises to the glyoxysome. It catalyses the reaction glyoxylate + acetyl-CoA + H2O = (S)-malate + CoA + H(+). The protein operates within carbohydrate metabolism; glyoxylate cycle; (S)-malate from isocitrate: step 2/2. This chain is Malate synthase, glyoxysomal, found in Gossypium hirsutum (Upland cotton).